Consider the following 302-residue polypeptide: Glycine--tRNA ligase alpha subunit (302 aa).

This sequence belongs to the class-II aminoacyl-tRNA synthetase family. Tetramer of two alpha and two beta subunits.

The protein localises to the cytoplasm. The catalysed reaction is tRNA(Gly) + glycine + ATP = glycyl-tRNA(Gly) + AMP + diphosphate. This is Glycine--tRNA ligase alpha subunit from Psychromonas ingrahamii (strain DSM 17664 / CCUG 51855 / 37).